The primary structure comprises 400 residues: Tryptophan synthase beta chain (400 aa).

The residue at position 92 (lysine 92) is an N6-(pyridoxal phosphate)lysine.

The protein belongs to the TrpB family. Tetramer of two alpha and two beta chains. Requires pyridoxal 5'-phosphate as cofactor.

It carries out the reaction (1S,2R)-1-C-(indol-3-yl)glycerol 3-phosphate + L-serine = D-glyceraldehyde 3-phosphate + L-tryptophan + H2O. It functions in the pathway amino-acid biosynthesis; L-tryptophan biosynthesis; L-tryptophan from chorismate: step 5/5. The beta subunit is responsible for the synthesis of L-tryptophan from indole and L-serine. The protein is Tryptophan synthase beta chain of Leptospira borgpetersenii serovar Hardjo-bovis (strain JB197).